The primary structure comprises 82 residues: UPF0213 protein MW0443 (82 aa).

The GIY-YIG domain occupies Asp-2–Arg-77.

It belongs to the UPF0213 family.

The sequence is that of UPF0213 protein MW0443 from Staphylococcus aureus (strain MW2).